Here is a 243-residue protein sequence, read N- to C-terminus: MTDYGEEQRNELEALESIYPDSFTVLSENPPSFTITVTSEAGENDETVQTTLKFTYSEKYPDEAPLYEIFSQENLEDNDVSDILKLLALQAEENLGMVMIFTLVTAVQEKLNEIVDQIKTRREEEKKQKEKEAEEAEKQLFHGTPVTIENFLNWKAKFDAELLEIKKKRMKEEEQAGKNKLSGKQLFETDHNLDTSDIQFLEDAGNNVEVDESLFQEMDDLELEDDEDDPDYNPADPESDSAD.

T2 carries the post-translational modification N-acetylthreonine. The RWD domain maps to 10 to 114; sequence NELEALESIY…TAVQEKLNEI (105 aa). Positions 142–197 are interaction with DRG2; sequence HGTPVTIENFLNWKAKFDAELLEIKKKRMKEEEQAGKNKLSGKQLFETDHNLDTSD. T144 bears the Phosphothreonine mark. The segment at 198 to 243 is disordered; sequence IQFLEDAGNNVEVDESLFQEMDDLELEDDEDDPDYNPADPESDSAD. Residues 209-243 show a composition bias toward acidic residues; it reads EVDESLFQEMDDLELEDDEDDPDYNPADPESDSAD.

Belongs to the RWDD1/GIR2 family. As to quaternary structure, interacts with DRG2. Interacts with androgen receptor.

In terms of biological role, protects DRG2 from proteolytic degradation. In Homo sapiens (Human), this protein is RWD domain-containing protein 1 (RWDD1).